Reading from the N-terminus, the 191-residue chain is Decorin-binding protein A (191 aa).

The first 29 residues, 1 to 29 (MIKCNNKTFNNLLKLTILVNLLISCGLTG), serve as a signal peptide directing secretion.

This sequence belongs to the decorin-binding protein family.

Functionally, binds to decorin which may mediate the adherence of B.burgdorferi to collagen fibers in skin and other tissues. This Borreliella burgdorferi (strain ATCC 35210 / DSM 4680 / CIP 102532 / B31) (Borrelia burgdorferi) protein is Decorin-binding protein A (dbpA).